A 246-amino-acid chain; its full sequence is Alpha-tubulin N-acetyltransferase (246 aa).

The N-acetyltransferase domain occupies 21–202 (LTLVPDGVSR…NNFVVFHSFF (182 aa)). Residues 135 to 148 (FYVDESCQRQGYGK) and 172 to 181 (SNKLLGFLRK) each bind acetyl-CoA.

The protein belongs to the acetyltransferase ATAT1 family.

It catalyses the reaction L-lysyl-[alpha-tubulin] + acetyl-CoA = N(6)-acetyl-L-lysyl-[alpha-tubulin] + CoA + H(+). In terms of biological role, specifically acetylates 'Lys-40' in alpha-tubulin on the lumenal side of microtubules. Promotes microtubule destabilization and accelerates microtubule dynamics; this activity may be independent of acetylation activity. Acetylates alpha-tubulin with a slow enzymatic rate, due to a catalytic site that is not optimized for acetyl transfer. Enters the microtubule through each end and diffuses quickly throughout the lumen of microtubules. Acetylates only long/old microtubules because of its slow acetylation rate since it does not have time to act on dynamically unstable microtubules before the enzyme is released. The sequence is that of Alpha-tubulin N-acetyltransferase from Leishmania infantum.